Consider the following 235-residue polypeptide: Urease accessory protein UreF (235 aa).

It belongs to the UreF family. As to quaternary structure, ureD, UreF and UreG form a complex that acts as a GTP-hydrolysis-dependent molecular chaperone, activating the urease apoprotein by helping to assemble the nickel containing metallocenter of UreC. The UreE protein probably delivers the nickel.

The protein resides in the cytoplasm. Required for maturation of urease via the functional incorporation of the urease nickel metallocenter. The polypeptide is Urease accessory protein UreF (Haemophilus influenzae (strain PittGG)).